The sequence spans 359 residues: 3-dehydroquinate synthase (359 aa).

NAD(+)-binding positions include 71–76 (DGEAHK), 105–109 (GVIGD), 129–130 (TT), Lys142, Lys151, and 169–172 (TLHT). Zn(2+) is bound by residues Glu184, His247, and His264.

The protein belongs to the sugar phosphate cyclases superfamily. Dehydroquinate synthase family. The cofactor is Co(2+). Zn(2+) serves as cofactor. NAD(+) is required as a cofactor.

The protein resides in the cytoplasm. It catalyses the reaction 7-phospho-2-dehydro-3-deoxy-D-arabino-heptonate = 3-dehydroquinate + phosphate. It participates in metabolic intermediate biosynthesis; chorismate biosynthesis; chorismate from D-erythrose 4-phosphate and phosphoenolpyruvate: step 2/7. Catalyzes the conversion of 3-deoxy-D-arabino-heptulosonate 7-phosphate (DAHP) to dehydroquinate (DHQ). The polypeptide is 3-dehydroquinate synthase (Neisseria meningitidis serogroup C (strain 053442)).